The chain runs to 549 residues: Urocanate hydratase (549 aa).

Residues 46 to 47 (GG), Gln-124, 170 to 172 (GMG), Glu-190, Arg-195, 236 to 237 (NA), 257 to 261 (QTSAH), 267 to 268 (YV), and Tyr-316 contribute to the NAD(+) site. Cys-404 is a catalytic residue. Gly-486 serves as a coordination point for NAD(+).

Belongs to the urocanase family. NAD(+) is required as a cofactor.

Its subcellular location is the cytoplasm. The enzyme catalyses 4-imidazolone-5-propanoate = trans-urocanate + H2O. The protein operates within amino-acid degradation; L-histidine degradation into L-glutamate; N-formimidoyl-L-glutamate from L-histidine: step 2/3. Catalyzes the conversion of urocanate to 4-imidazolone-5-propionate. This chain is Urocanate hydratase, found in Natranaerobius thermophilus (strain ATCC BAA-1301 / DSM 18059 / JW/NM-WN-LF).